Reading from the N-terminus, the 345-residue chain is Beta-2-glycoprotein 1 (345 aa).

The N-terminal stretch at 1–19 (MVSPVLALFSAFLCHVAIA) is a signal peptide. 4 Sushi domains span residues 21–81 (RICP…RCVP), 82–139 (RVCP…ACAR), 140–202 (ITCP…ECLE), and 203–262 (VKCP…TCRE). Intrachain disulfides connect Cys-23–Cys-66, Cys-51–Cys-79, Cys-84–Cys-124, Cys-110–Cys-137, Cys-142–Cys-188, Cys-174–Cys-200, Cys-205–Cys-248, Cys-234–Cys-260, Cys-264–Cys-315, Cys-300–Cys-325, and Cys-307–Cys-345. An O-linked (GalNAc...) threonine glycan is attached at Thr-33. 5 N-linked (GlcNAc...) asparagine glycosylation sites follow: Asn-105, Asn-117, Asn-162, Asn-183, and Asn-193. The tract at residues 263-345 (SCKLPVKKAT…KTDASELTPC (83 aa)) is sushi-like.

Expressed by the liver and secreted in plasma.

It localises to the secreted. In terms of biological role, binds to various kinds of negatively charged substances such as heparin, phospholipids, and dextran sulfate. May prevent activation of the intrinsic blood coagulation cascade by binding to phospholipids on the surface of damaged cells. This Mus musculus (Mouse) protein is Beta-2-glycoprotein 1 (Apoh).